We begin with the raw amino-acid sequence, 720 residues long: Engulfment and cell motility protein 3 (720 aa).

Residues 307–479 enclose the ELMO domain; sequence EQREQLQVLR…VVREQLARTL (173 aa). The 123-residue stretch at 542–664 folds into the PH domain; it reads RLCEGTLFRK…TDGLSALLGS (123 aa). The SH3-binding motif lies at 696–706; it reads PERPPPVPPPP.

In terms of assembly, probably interacts directly with the SH3-domain of DOCK1 via its SH3-binding site. Part of a complex with DOCK1 and RAC1. Interacts with ADGRB3.

It localises to the cytoplasm. Its function is as follows. Involved in cytoskeletal rearrangements required for phagocytosis of apoptotic cells and cell motility. Acts in association with DOCK1 and CRK. Was initially proposed to be required in complex with DOCK1 to activate Rac Rho small GTPases. May enhance the guanine nucleotide exchange factor (GEF) activity of DOCK1. The sequence is that of Engulfment and cell motility protein 3 (ELMO3) from Homo sapiens (Human).